We begin with the raw amino-acid sequence, 1003 residues long: MAGSSGYGLLKLLQKLSDEEFQRFKELLREEPEKFKLKPISWTKIENSSKESLVTLLNTHYPGQAWNMMLSLFLQVNREDLSIMAQKKKRHKQTKYKKFMKTTFERIWTLETNTHIPDRNYHLIVEVQYKALQEIFDSESEPVTAIVAGTTGEGKTTFLRKAMLDWASGVLLQNRFQYVFFFSVFSLNNTTELSLAELISSTLPESSETVDDILSDPKRILFILDGFDYLKFDLELRTNLCNDWRKRLPTQIVLSSLLQKIMLPGCSLLLELGQISVPKIRHLLKYPRVITMQGFSERSVEFYCMSFFDNQRGIEVAENLRNNEVLHLCSNPYLCWMFCSCLKWQFDREEEGYFKAKTDAAFFTNFMVSAFKSTYAHSPSKQNRARLKTLCTLAVEGMWKELFVFDSEDLRRNGISESDKAVWLKMQFLQTHGNHTVFYHPTLQSYFAAMFYFLKQDKDICVPVIGSIPQLLGNMYARGQTQWLQLGTFLFGLINEQVAALLQPCFGFIQPIYVRQEIICYFKCLGQQECNEKLERSQTLFSCLRDSQEERFVRQVVDLLEEITVDISSSDVLSVTAYALQKSSKLKKLHLHIQKTVFSEIYCPDHCKTRTSIGKRRNTAEYWKTLCGIFCNLYVLDLDSCQFNKRAIQDLCNSMSPTPTVPLTAFKLQSLSCSFMADFGDGSLFHTLLQLPHLKYLNLYGTYLSMDVTEKLCAALRCSACRVEELLLGKCGISSKACGIIAISLINSKVKHLSLVENPLKNKGVMSLCEMLKDPSCVLQSLMLSYCCLTFIACGHLYEALLSNKHLSLLDLGSNFLEDTGVNLLCEALKDPNCTLKELWLPGCFLTSQCCEEISAVLICNRNLKTLKLGNNNIQDTGVRQLCEALSHPNCNLECLGLDLCEFTSDCCKDLALALTTCKTLNSLNLDWKTLDHSGLVVLCEALNHKRCNLKMLGLDKSAFSEESQTLLQDVEKKNNNLNILHHPWFEAERNKRGTRLVWNSRN.

A Pyrin domain is found at 1–91 (MAGSSGYGLL…SIMAQKKKRH (91 aa)). The region spanning 143–465 (VTAIVAGTTG…QDKDICVPVI (323 aa)) is the NACHT domain. 149 to 156 (GTTGEGKT) is a binding site for ATP. LRR repeat units lie at residues 749-770 (KVKHLSLVENPLKNKGVMSLCE), 778-799 (VLQSLMLSYCCLTFIACGHLYE), 806-826 (HLSLLDLGSNFLEDTGVNLLC), 835-856 (TLKELWLPGCFLTSQCCEEISA), 863-883 (NLKTLKLGNNNIQDTGVRQLC), 892-913 (NLECLGLDLCEFTSDCCKDLAL), and 920-940 (TLNSLNLDWKTLDHSGLVVLC).

Sensor component of NLRP9 inflammasomes. Inflammasomes are supramolecular complexes that assemble in the cytosol in response to pathogens, such as rotavirus, but not encephalomyocarditis virus (EMCV), and play critical roles in innate immunity and inflammation. The core of NLRP9 inflammasomes consists of a signal sensor component (NLRP9), an adapter (ASC/PYCARD), which recruits an effector pro-inflammatory caspase (CASP1). Within the complex, NLRP9 and PYCARD interact via their respective DAPIN/pyrin domains. This interaction initiates speck formation (nucleation) which greatly enhances further addition of soluble PYCARD molecules to the speck in a prion-like polymerization process. Clustered PYCARD nucleates the formation of CASP1 filaments through the interaction of their respective CARD domains, acting as a platform for CASP1 polymerization. CASP1 filament formation increases local enzyme concentration, resulting in trans-autocleavage and activation. Active CASP1 then processes IL1B and IL18 precursors, leading to the release of mature cytokines in the extracellular milieu and inflammatory response. Interacts with DHX9 upon rotavirus infection; this interaction may trigger inflammasome activation and inflammatory response. In terms of tissue distribution, predominantly expressed in the intestine, including proximal and distal colon, cecum, ileum, jejunum and duodenum (at protein level). In the ileum, expressed in epithelial cells. Also expressed in oocytes at all follicular stages and in preimplantation embryos (at protein level). Although expression decreases in preimplantation embryos, it is still detectable in blastocyts.

The protein localises to the cytoplasm. Its subcellular location is the inflammasome. Its function is as follows. As the sensor component of the NLRP9 inflammasome, plays a crucial role in innate immunity and inflammation. In response to pathogens, including rotavirus, initiates the formation of the inflammasome polymeric complex, made of NLRP9, PYCARD and CASP1. Recruitment of proCASP1 to the inflammasome promotes its activation and CASP1-catalyzed IL1B and IL18 maturation and release in the extracellular milieu. The active cytokines stimulate inflammatory responses. Inflammasomes can also induce pyroptosis, an inflammatory form of programmed cell death. NLRP9 inflammasome activation may be initiated by DHX9 interaction with viral double-stranded RNA (dsRNA), preferentially to short dsRNA segments. The chain is NACHT, LRR and PYD domains-containing protein 9B (Nlrp9b) from Mus musculus (Mouse).